Here is a 503-residue protein sequence, read N- to C-terminus: MATLTYEEALEILRQQIKDFEPEAKMEEVGVVYYVGDGVARAYGLENVMAMEIVEFQGGQQGIAFNLEEDNVGIIILGSETGIEEGHIVKRTGRILDAPVGEGLVGRVIDPLGNPLDGKGPIQFEYRSPVEKIAPGVVKRKPVHEPLQTGIKAIDAMIPIGRGQRELIIGDRATGKTTVAIDTILAQKNSDVYCIYVAVGQKRAAIARLIELLEREGAMEYTTVVVASASDPASLQYLAPFVGCTIGEYFRDNGKHALIIYDDLSKHAEAYRQLSLLMRRPPGREAYPGDVFYLHSRLLERAAKLNDDLGAGSLTALPIIETKAGDVAAYIPTNVISITDGQIYLEADLFNKGIRPAINVGLSVSRVGGAAQIKAMKQVAGTLRLELAQFRELEAFVQFASELDKATQQQINRGLRLVELLKQEPYNPIPVEKQIVLIYAGTHGYLDDIPVESVRKFEKELYAYLDNERPDILKEISEKKKLDEELEKKIKEALDAFKQKFVP.

Position 170-177 (170-177 (GDRATGKT)) interacts with ATP.

The protein belongs to the ATPase alpha/beta chains family. As to quaternary structure, F-type ATPases have 2 components, CF(1) - the catalytic core - and CF(0) - the membrane proton channel. CF(1) has five subunits: alpha(3), beta(3), gamma(1), delta(1), epsilon(1). CF(0) has three main subunits: a(1), b(2) and c(9-12). The alpha and beta chains form an alternating ring which encloses part of the gamma chain. CF(1) is attached to CF(0) by a central stalk formed by the gamma and epsilon chains, while a peripheral stalk is formed by the delta and b chains.

It localises to the cell inner membrane. The enzyme catalyses ATP + H2O + 4 H(+)(in) = ADP + phosphate + 5 H(+)(out). Functionally, produces ATP from ADP in the presence of a proton gradient across the membrane. The alpha chain is a regulatory subunit. The polypeptide is ATP synthase subunit alpha (Aquifex aeolicus (strain VF5)).